A 336-amino-acid polypeptide reads, in one-letter code: tRNA N6-adenosine threonylcarbamoyltransferase (336 aa).

Fe cation contacts are provided by histidine 115 and histidine 119. Substrate-binding positions include 137-141 (LVSGG), aspartate 170, glycine 183, aspartate 187, and asparagine 276. Aspartate 302 provides a ligand contact to Fe cation.

It belongs to the KAE1 / TsaD family. It depends on Fe(2+) as a cofactor.

The protein localises to the cytoplasm. It catalyses the reaction L-threonylcarbamoyladenylate + adenosine(37) in tRNA = N(6)-L-threonylcarbamoyladenosine(37) in tRNA + AMP + H(+). Its function is as follows. Required for the formation of a threonylcarbamoyl group on adenosine at position 37 (t(6)A37) in tRNAs that read codons beginning with adenine. Is involved in the transfer of the threonylcarbamoyl moiety of threonylcarbamoyl-AMP (TC-AMP) to the N6 group of A37, together with TsaE and TsaB. TsaD likely plays a direct catalytic role in this reaction. The polypeptide is tRNA N6-adenosine threonylcarbamoyltransferase (Streptococcus suis (strain 98HAH33)).